The following is a 183-amino-acid chain: UPF0397 protein PBPRA2239 (183 aa).

The next 5 membrane-spanning stretches (helical) occupy residues 8-28 (VVLI…MFGI), 41-61 (AVLA…VGFI), 69-89 (FAGW…GLII), 110-130 (FALF…CSAY), and 147-167 (LIII…YILT).

This sequence belongs to the UPF0397 family.

It localises to the cell membrane. This is UPF0397 protein PBPRA2239 from Photobacterium profundum (strain SS9).